Consider the following 165-residue polypeptide: MDPVNFIKTYAPRGSIIFINYTMSLTSHLNPSIEKHVGIYYGTLLSEHLVVESTYRKGVQIVPLDSFFEGYLSAKVYMLENIQVMKIAADTSLTLLGIPYGFGHNRMYCFKLVAECYKNAGINTSSKRILGKDIFLSQNFTDDNRWIKIYDSNNLTFWQIDYLKG.

This sequence belongs to the orthopoxvirus OPG091 family.

Its subcellular location is the virion. The protein resides in the host cytoplasm. Contributes to virulence in host but not to replication in cell culture. This Variola virus (isolate Human/India/Ind3/1967) (VARV) protein is Protein OPG091 (OPG091).